The following is a 48-amino-acid chain: Small polypeptide DEVIL 19 (48 aa).

The tract at residues 13–44 is required for DVL/RTFL small polypeptide activity; sequence AFTSKCVSLVKEQRARLYILRRCATMLCCWYI. Residues 25 to 42 traverse the membrane as a helical segment; that stretch reads QRARLYILRRCATMLCCW.

It belongs to the DVL/RTFL small polypeptides family.

The protein resides in the cell membrane. Functionally, small polypeptide acting as a regulatory molecule which coordinates cellular responses required for differentiation, growth and development, probably by restricting polar cell proliferation in lateral organs and coordinating socket cell recruitment and differentiation at trichome sites. In Arabidopsis thaliana (Mouse-ear cress), this protein is Small polypeptide DEVIL 19.